Here is a 389-residue protein sequence, read N- to C-terminus: UDP-D-apiose/UDP-D-xylose synthase 1 (389 aa).

Residues Phe-28, Ile-29, Asp-49, Asn-76, Ile-77, and Leu-96 each coordinate NAD(+). Residues Tyr-105, Thr-139, Glu-141, Arg-182, and Tyr-185 each coordinate UDP-alpha-D-glucuronate. NAD(+) contacts are provided by Tyr-185 and Lys-189. The active-site Proton acceptor is the Tyr-185. Asn-214 contributes to the UDP-alpha-D-glucuronate binding site. Residues Trp-215 and Arg-235 each coordinate NAD(+). The UDP-alpha-D-glucuronate site is built by Lys-251, Val-253, Arg-260, Tyr-331, Tyr-335, Asp-337, and Arg-341.

The protein belongs to the NAD(P)-dependent epimerase/dehydratase family. Homodimer and heterodimer with AXS2. Requires NAD(+) as cofactor. As to expression, widely expressed with stronger expression in leaves and stems, and lower levels in flowers, siliques, pistils, pollen and roots.

Its subcellular location is the cytoplasm. The catalysed reaction is UDP-alpha-D-glucuronate + H(+) = UDP-alpha-D-xylose + CO2. It carries out the reaction UDP-alpha-D-glucuronate + H(+) = UDP-alpha-D-apiose + CO2. Inhibited by UDP-D-galacturonate. Its function is as follows. Together with AXS2, catalyzes the conversion of UDP-D-glucuronate into a mixture of UDP-D-apiose (UDP-Api) as the main product and UDP-D-xylose to a lesser extent, via a cycle of oxidation and reduction. D-Apiose (3-C-hydroxymethyl-d-erythrose) is the only plant cell wall monosaccharide with a branched carbon skeleton and is found in rhamnogalacturonan II (RG-II), apiogalacturonan, and several apioglycosides. In Arabidopsis thaliana (Mouse-ear cress), this protein is UDP-D-apiose/UDP-D-xylose synthase 1.